A 148-amino-acid polypeptide reads, in one-letter code: Large ribosomal subunit protein bL9 (148 aa).

It belongs to the bacterial ribosomal protein bL9 family.

Its function is as follows. Binds to the 23S rRNA. In Bifidobacterium animalis subsp. lactis (strain AD011), this protein is Large ribosomal subunit protein bL9.